A 1029-amino-acid polypeptide reads, in one-letter code: Probable E3 ubiquitin protein ligase C167.07c (1029 aa).

The 30-residue stretch at 46–75 folds into the IQ domain; the sequence is AENNSVAVQSLSRGFLARRKFKQDFRERWI. One can recognise an HECT domain in the interval 692–1029; that stretch reads FGKLLKGPIR…VRSGVGFGFS (338 aa). The Glycyl thioester intermediate role is filled by Cys-997.

The protein localises to the cytoplasm. Its subcellular location is the nucleus. The catalysed reaction is S-ubiquitinyl-[E2 ubiquitin-conjugating enzyme]-L-cysteine + [acceptor protein]-L-lysine = [E2 ubiquitin-conjugating enzyme]-L-cysteine + N(6)-ubiquitinyl-[acceptor protein]-L-lysine.. Probable E3 ubiquitin-protein ligase which mediates ubiquitination and subsequent proteasomal degradation of target proteins. The sequence is that of Probable E3 ubiquitin protein ligase C167.07c from Schizosaccharomyces pombe (strain 972 / ATCC 24843) (Fission yeast).